An 810-amino-acid polypeptide reads, in one-letter code: LPS-assembly protein LptD (810 aa).

Residues 1–29 (MTKWTLGYSYPIALTISLIPALTPAIVQA) form the signal peptide.

This sequence belongs to the LptD family. As to quaternary structure, component of the lipopolysaccharide transport and assembly complex. Interacts with LptE and LptA.

It is found in the cell outer membrane. In terms of biological role, together with LptE, is involved in the assembly of lipopolysaccharide (LPS) at the surface of the outer membrane. The sequence is that of LPS-assembly protein LptD from Aeromonas salmonicida (strain A449).